The chain runs to 198 residues: Ribonuclease HII (198 aa).

The region spanning 9–198 (ITVAGADEAG…LLPDQLKIDF (190 aa)) is the RNase H type-2 domain. 3 residues coordinate a divalent metal cation: D15, E16, and D107.

It belongs to the RNase HII family. Mn(2+) is required as a cofactor. Mg(2+) serves as cofactor.

The protein resides in the cytoplasm. It catalyses the reaction Endonucleolytic cleavage to 5'-phosphomonoester.. Functionally, endonuclease that specifically degrades the RNA of RNA-DNA hybrids. The polypeptide is Ribonuclease HII (Christiangramia forsetii (strain DSM 17595 / CGMCC 1.15422 / KT0803) (Gramella forsetii)).